Consider the following 241-residue polypeptide: DNA repair protein RecO (241 aa).

This sequence belongs to the RecO family.

Its function is as follows. Involved in DNA repair and RecF pathway recombination. The chain is DNA repair protein RecO from Ruegeria sp. (strain TM1040) (Silicibacter sp.).